Consider the following 516-residue polypeptide: RNA-binding region-containing protein 3 (516 aa).

Disordered regions lie at residues 1–27 (MAAP…RGDR), 106–130 (VHSP…DDKE), 210–254 (EDYM…DEDR), and 264–283 (ANLQ…RKKR). Phosphoserine is present on S21. Residues 27-102 (RTLLVRHLPA…HTLVVEFAKE (76 aa)) form the RRM 1 domain. S108 is subject to Phosphoserine. A compositionally biased stretch (basic and acidic residues) spans 115–130 (TEKKKRSDDPVEDDKE). Pro residues predominate over residues 217 to 230 (APLPPTSPQPPEEP). Residues 269 to 283 (KRPKPIKQRHVRKKR) are compositionally biased toward basic residues. An RRM 2 domain is found at 419-502 (CRIYVKNLAK…KPMVVQFARS (84 aa)).

Component of the U11/U12 snRNPs that are part of the U12-type spliceosome. Found in a complex with m(7)G-capped U12 snRNA. Interacts with PDCD7.

Its subcellular location is the nucleus. Participates in pre-mRNA U12-dependent splicing, performed by the minor spliceosome which removes U12-type introns. U12-type introns comprises less than 1% of all non-coding sequences. Binds to the 3'-stem-loop of m(7)G-capped U12 snRNA. This Bos taurus (Bovine) protein is RNA-binding region-containing protein 3 (RNPC3).